Reading from the N-terminus, the 713-residue chain is Phenylalanine--tRNA ligase beta subunit (713 aa).

A tRNA-binding domain is found at 39–153 (IRHVENIKYG…EANLNEDPIA (115 aa)). Residues 379 to 454 (LKPKEILFDH…RFYGYDNFPI (76 aa)) enclose the B5 domain. Mg(2+) contacts are provided by Asp-432, Asp-438, Glu-441, and Glu-442.

The protein belongs to the phenylalanyl-tRNA synthetase beta subunit family. Type 1 subfamily. Tetramer of two alpha and two beta subunits. The cofactor is Mg(2+).

It is found in the cytoplasm. It carries out the reaction tRNA(Phe) + L-phenylalanine + ATP = L-phenylalanyl-tRNA(Phe) + AMP + diphosphate + H(+). In Mycoplasma mobile (strain ATCC 43663 / 163K / NCTC 11711) (Mesomycoplasma mobile), this protein is Phenylalanine--tRNA ligase beta subunit.